The following is a 597-amino-acid chain: Protein kinase C-like 3 (597 aa).

The PB1 domain maps to Asp-12–Gly-95. The segment at Gly-127–Cys-177 adopts a Phorbol-ester/DAG-type zinc-finger fold. Positions Pro-181 to Thr-238 are disordered. In terms of domain architecture, Protein kinase spans Phe-253–Phe-522. Residues Ile-259–Val-267 and Lys-282 each bind ATP. Asp-377 functions as the Proton acceptor in the catalytic mechanism. Residues Gly-524–Asp-595 enclose the AGC-kinase C-terminal domain.

It belongs to the protein kinase superfamily. AGC Ser/Thr protein kinase family. PKC subfamily. In terms of assembly, interaction with par-3 required for the peripheral localization of par-6 and to form a par-3/par-6/pkc-3 complex, which is activated when cdc-42 interacts with par-6. Binds avidly to the phosphotyrosine interaction domain (PID) of a novel pkc-3 adapter protein num-1, which enables tethering and targeting of pkc-3 to the cell periphery. Mg(2+) is required as a cofactor.

The protein resides in the cytoplasm. Its subcellular location is the cytoskeleton. The catalysed reaction is L-seryl-[protein] + ATP = O-phospho-L-seryl-[protein] + ADP + H(+). It catalyses the reaction L-threonyl-[protein] + ATP = O-phospho-L-threonyl-[protein] + ADP + H(+). Required for the normal progression of embryogenesis and viability of the organism. Plays an indispensable role in establishing embryonic polarity and in recruiting and maintaining par-6 to the periphery, through interaction with par-3. Required for epithelial cell polarity in the distal spermatheca. Phosphorylates serine residues of num-1. Required for the expression of antimicrobial peptide nlp-29 in response in response to fungal infection or physical injury. The sequence is that of Protein kinase C-like 3 from Caenorhabditis briggsae.